Consider the following 351-residue polypeptide: Modulator of apoptosis 1 (351 aa).

The short motif at Tyr49–Leu52 is the LIR element. A BH3-like region spans residues Leu120–Glu127. An RASSF1-binding region spans residues Lys202–Arg205.

The protein belongs to the PNMA family. Homodimer. Under normal circumstances, held in an inactive conformation by an intramolecular interaction. Interacts with BAX. Binding to RASSF1 isoform A (RASSF1A) relieves this inhibitory interaction and allows further binding to BAX. Also binds to BCL2 and BCLX. Recruited to the TNFRSF1A and TNFRSF10A complexes in response to their respective cognate ligand, after internalization. Interacts with TRIM39. Interacts with RASSF6. Interacts with ATG8 proteins MAP1LC3A, MAP1LC3B and MAP1LC3C. Does not interact with ATG8 proteins GABARAPL1, GABARAPL2 and GABARAP. Interacts with SQSTM1; promoting dissociation of SQSTM1 inclusion bodies that sequester KEAP1. Post-translationally, ubiquitinated and degraded during mitotic exit by APC/C-Cdh1, this modification is inhibited by TRIM39. As to expression, widely expressed, with high levels in heart and brain.

The protein localises to the cytoplasm. It is found in the cytosol. It localises to the mitochondrion outer membrane. Its subcellular location is the extracellular vesicle membrane. Its function is as follows. Retrotransposon-derived protein that forms virion-like capsids. Acts as an effector of BAX during apoptosis: enriched at outer mitochondria membrane and associates with BAX upon induction of apoptosis, facilitating BAX-dependent mitochondrial outer membrane permeabilization and apoptosis. Required for death receptor-dependent apoptosis. When associated with RASSF1, promotes BAX conformational change and translocation to mitochondrial membranes in response to TNF and TNFSF10 stimulation. Also promotes autophagy: promotes phagophore closure via association with ATG8 proteins. Acts as an inhibitor of the NFE2L2/NRF2 pathway via interaction with SQSTM1: interaction promotes dissociation of SQSTM1 inclusion bodies that sequester KEAP1, relieving inactivation of the BCR(KEAP1) complex. This chain is Modulator of apoptosis 1, found in Homo sapiens (Human).